The primary structure comprises 938 residues: MSDYKSTLNLPETGFPMRGDLAKREPGMLARWTDDDLYGIIRAAKKGKKTFILHDGPPYANGSIHIGHSVNKILKDIIIKSKGLSGYDSPYVPGWDCHGLPIELKVEQEYGKPGEKFTAAEFRAKCREYAATQVDGQRKDFIRLGVLGDWSHPYLTMDFKTEANIIRALGKIIGNGHLHKGAKPVHWCVDCRSALAEAEVEYYDKTSPSIDVAFLAVDQDALKTKFGVSNVNGPISLVIWTTTPWTLPANRAISIAPDFDYALVQIDGQAVILAKDLVESVMQRIGVSDYTILGTVKGAELELLRFTHPFMDFDVPAILGDHVTLDAGTGAVHTAPGHGPDDYVIGQKYGLETANPVGPDGTYLPGTYPTLDGVNVFKANDIVIALLQEKGALLHVEKMQHSYPCCWRHKTPIIFRATPQWFVSMDQKGLRAQSLKEIKGVQWIPDWGQARIESMVANRPDWCISRQRTWGVPMSLFVHKDTEELHPRTLELMEEVAKRVEVDGIQAWWDLDAKEILGDEADQYVKVPDTLDVWFDSGSTHSSVVDVRPEFAGHAADMYLEGSDQHRGWFMSSLMISTAMKGKAPYRQVLTHGFTVDGQGRKMSKSIGNTVSPQDVMNKLGADILRLWVASTDYTGEMAVSDEILKRAADSYRRIRNTARFLLANLNGFDPAKDMVKPEEMVVLDRWAVGCAKAAQEDILKAYEAYDFHEVVQRLMRFCSVEMGSFYLDIIKDRQYTAKADSVARRSCQTALYHIAEALVRWMAPILSFTADEVWGYLPGEREKYVFTGEWYEGLFGLADSEAMNDAFWDELLKVRGEVNKVIEQARADKKVGGSLEAAVTLYAEPELAAKLTALGDELRFVLLTSGATVADYNDAPADAQQSEVLKGLKVALSKAEGEKCPRCWHYTQDVGKVAEHAEICGRCVSNVAGDGEKRKFA.

The 'HIGH' region motif lies at 58–68; sequence PYANGSIHIGH. K183 carries the N6-acetyllysine modification. An L-isoleucyl-5'-AMP-binding site is contributed by E561. A 'KMSKS' region motif is present at residues 602 to 606; sequence KMSKS. Position 605 (K605) interacts with ATP. Positions 901, 904, 921, and 924 each coordinate Zn(2+).

This sequence belongs to the class-I aminoacyl-tRNA synthetase family. IleS type 1 subfamily. Monomer. Requires Zn(2+) as cofactor.

The protein resides in the cytoplasm. The enzyme catalyses tRNA(Ile) + L-isoleucine + ATP = L-isoleucyl-tRNA(Ile) + AMP + diphosphate. In terms of biological role, catalyzes the attachment of isoleucine to tRNA(Ile). As IleRS can inadvertently accommodate and process structurally similar amino acids such as valine, to avoid such errors it has two additional distinct tRNA(Ile)-dependent editing activities. One activity is designated as 'pretransfer' editing and involves the hydrolysis of activated Val-AMP. The other activity is designated 'posttransfer' editing and involves deacylation of mischarged Val-tRNA(Ile). The sequence is that of Isoleucine--tRNA ligase from Escherichia coli O45:K1 (strain S88 / ExPEC).